Consider the following 276-residue polypeptide: S-adenosylmethionine-dependent nucleotide dehydratase (276 aa).

The region spanning 6-216 (TSVRKFRSAN…RRRHEDIGCI (211 aa)) is the Radical SAM core domain. [4Fe-4S] cluster contacts are provided by cysteine 22, cysteine 26, and cysteine 29.

The protein belongs to the radical SAM superfamily. Viperin family. The cofactor is [4Fe-4S] cluster.

The catalysed reaction is CTP + AH2 + S-adenosyl-L-methionine = 3'-deoxy-3',4'-didehydro-CTP + 5'-deoxyadenosine + L-methionine + A + H2O + H(+). Functionally, expression of pVip50 in E.coli (strain MG1655) confers resistance to phage P1; has no effect against T7. Catalyzes the conversion of cytosine triphosphate (CTP) to 3'-deoxy-3',4'-didehydro-CTP (ddhCTP), probably via a SAM-dependent radical mechanism. The modified nucleotide represses transcription from T7 RNA polymerase-directed genes (possibly by acting as chain terminators), strongly suggesting these nucleotides block viral polymerase transcription. How this protein allows bacteria to resist viruses that do not encode their own RNA polymerase (such as lambda, P1) is unknown. The chain is S-adenosylmethionine-dependent nucleotide dehydratase from Thermoplasmatales archaeon (strain ISO4-H5).